The sequence spans 535 residues: Heparanase (535 aa).

A signal peptide spans 1-27 (MLRLLLLWLWGPLGALAQGAPAGTAPT). Residues 54-56 (DAS) and Thr89 contribute to the heparan sulfate group site. Residues 102–149 (PTSEERSYWKSQVNHDICRSEPVSAAVLRKLQVEWPFQELLLLREQYQ) constitute a propeptide, linker peptide. Cys119 and Cys171 form a disulfide bridge. Residue 150–154 (KEFKN) participates in heparan sulfate group binding. Residues Asn192 and Asn209 are each glycosylated (N-linked (GlcNAc...) asparagine). Glu217 acts as the Proton donor in catalysis. Residues 262–272 (QPRGKTVKLLR), His288, and Arg295 each bind heparan sulfate group. Positions 280-409 (EVIDSLTWHH…LLFKKLVGPR (130 aa)) are required for heterodimerization with the heparanase 8 kDa subunit. Glu335 serves as the catalytic Nucleophile. Residues 340–342 (YGG) and 381–383 (GNY) each bind heparan sulfate group. A disulfide bridge links Cys429 with Cys534. A glycan (N-linked (GlcNAc...) asparagine) is linked at Asn451. Residues 519 to 535 (FSYGFFVIRNAKIAACI) form a required for transferring proheparanase to the Golgi apparatus, secretion and subsequent enzyme activity and for enhancement of PKB/AKT1 phosphorylation region.

This sequence belongs to the glycosyl hydrolase 79 family. Heterodimer; heterodimer formation between the 8 kDa and the 50 kDa subunits is required for enzyme activity. Interacts with TF; the interaction, inhibited by heparin, enhances the generation of activated factor X and activates coagulation. Interacts with HRG; the interaction is enhanced at acidic pH, partially inhibits binding of HPSE to cell surface receptors and modulates its enzymatic activity. Interacts with SDC1; the interaction enhances the shedding of SDC1. Interacts with HPSE2. Proteolytically processed. The cleavage of the 65 kDa form leads to the generation of a linker peptide, and the 8 kDa and 50 kDa products. The active form, the 8/50 kDa heterodimer, is resistant to degradation. Complete removal of the linker peptide appears to be a prerequisite to the complete activation of the enzyme. Post-translationally, N-glycosylated. Glycosylation of the 50 kDa subunit appears to be essential for its solubility. Expressed in skin, mainly in the stratum granulosum and the first layer of the stratum corneum in the upper part of the epidermis. Also detected in hair follicles and in sebaceous glands.

It is found in the lysosome membrane. It localises to the secreted. The protein localises to the nucleus. It carries out the reaction endohydrolysis of (1-&gt;4)-beta-D-glycosidic bonds of heparan sulfate chains in heparan sulfate proteoglycan.. Its activity is regulated as follows. Inhibited by EDTA and activated by calcium and magnesium. Inhibited by laminarin sulfate and, to a lower extent, by heparin and sulfamin. In terms of biological role, endoglycosidase that cleaves heparan sulfate proteoglycans (HSPGs) into heparan sulfate side chains and core proteoglycans. Participates in extracellular matrix (ECM) degradation and remodeling. Selectively cleaves the linkage between a glucuronic acid unit and an N-sulfo glucosamine unit carrying either a 3-O-sulfo or a 6-O-sulfo group. Can also cleave the linkage between a glucuronic acid unit and an N-sulfo glucosamine unit carrying a 2-O-sulfo group, but not linkages between a glucuronic acid unit and a 2-O-sulfated iduronic acid moiety. It is essentially inactive at neutral pH but becomes active under acidic conditions such as during tumor invasion and in inflammatory processes. Facilitates cell migration associated with metastasis, wound healing and inflammation. Enhances shedding of syndecans, and increases endothelial invasion and angiogenesis in myelomas. Acts as a procoagulant by increasing the generation of activation factor X in the presence of tissue factor and activation factor VII. Increases cell adhesion to the extracellular matrix (ECM), independent of its enzymatic activity. Induces AKT1/PKB phosphorylation via lipid rafts increasing cell mobility and invasion. Heparin increases this AKT1/PKB activation. Regulates osteogenesis. Enhances angiogenesis through up-regulation of SRC-mediated activation of VEGF. Implicated in hair follicle inner root sheath differentiation and hair homeostasis. The protein is Heparanase (Hpse) of Mus musculus (Mouse).